The primary structure comprises 503 residues: SWI/SNF and RSC complexes subunit ssr2 (503 aa).

One can recognise an SWIRM domain in the interval 18–115 (IIVPSYAGWF…YQIDPETRPA (98 aa)). Residue S175 is modified to Phosphoserine. The ZZ-type; degenerate zinc-finger motif lies at 188-242 (RVDKVCFTCGVNCSQTWYHNLKNKKYDICPNCYKQGRFSSSFNSSDFLCMDAIDF). Zn(2+) is bound by residues C193, C196, C216, and C219. An SANT domain is found at 245–296 (DEEKPWSNQETLLLLEAIETYGDDWNQIALHVGSRTKEQCLIHFLQIPIEDP). Position 306 is a phosphoserine (S306).

Belongs to the SMARCC family. Component of the RSC complex composed of at least arp9, arp42, rsc1, rsc4, rsc7, rsc9, rsc58, sfh1, snf21, ssr1, ssr2, ssr3 and ssr4. The complex interacts with histone and histone variant components of centromeric chromatin. Component of the SWI/SNF global transcription activator complex composed of at least arp9, arp42, snf5, snf22, snf30, sbf59, sol1, ssr1, ssr2, ssr3, ssr4 and tfg3.

It localises to the cytoplasm. Its subcellular location is the nucleus. Its function is as follows. Component of the chromatin structure remodeling complex (RSC), which is involved in transcription regulation and nucleosome positioning. Controls particularly membrane and organelle development genes. Part of the SWI/SNF complex, an ATP-dependent chromatin remodeling complex, required for the positive and negative regulation of gene expression of a large number of genes. It changes chromatin structure by altering DNA-histone contacts within a nucleosome, leading eventually to a change in nucleosome position, thus facilitating or repressing binding of gene-specific transcription factors. The sequence is that of SWI/SNF and RSC complexes subunit ssr2 (ssr2) from Schizosaccharomyces pombe (strain 972 / ATCC 24843) (Fission yeast).